A 158-amino-acid chain; its full sequence is Sporulation-delaying protein SdpA (158 aa).

The protein resides in the cytoplasm. Functionally, required for the maturation of SdpC to SDP. Not required for SdpC signal peptide cleavage, secretion from the cell or disulfide bond formation. The protein is Sporulation-delaying protein SdpA of Bacillus subtilis (strain 168).